Consider the following 185-residue polypeptide: Ribose 1,5-bisphosphate phosphokinase PhnN (185 aa).

10–17 provides a ligand contact to ATP; sequence GPSGSGKD.

This sequence belongs to the ribose 1,5-bisphosphokinase family.

It catalyses the reaction alpha-D-ribose 1,5-bisphosphate + ATP = 5-phospho-alpha-D-ribose 1-diphosphate + ADP. It functions in the pathway metabolic intermediate biosynthesis; 5-phospho-alpha-D-ribose 1-diphosphate biosynthesis; 5-phospho-alpha-D-ribose 1-diphosphate from D-ribose 5-phosphate (route II): step 3/3. Functionally, catalyzes the phosphorylation of ribose 1,5-bisphosphate to 5-phospho-D-ribosyl alpha-1-diphosphate (PRPP). The protein is Ribose 1,5-bisphosphate phosphokinase PhnN of Pseudomonas paraeruginosa (strain DSM 24068 / PA7) (Pseudomonas aeruginosa (strain PA7)).